Here is a 609-residue protein sequence, read N- to C-terminus: Elongation factor 4 (609 aa).

The region spanning 11–193 is the tr-type G domain; it reads SRIRNFSIIA…QIVEKVPAPS (183 aa). Residues 23–28 and 140–143 each bind GTP; these read DHGKST and NKID.

It belongs to the TRAFAC class translation factor GTPase superfamily. Classic translation factor GTPase family. LepA subfamily.

The protein localises to the cell membrane. The catalysed reaction is GTP + H2O = GDP + phosphate + H(+). Its function is as follows. Required for accurate and efficient protein synthesis under certain stress conditions. May act as a fidelity factor of the translation reaction, by catalyzing a one-codon backward translocation of tRNAs on improperly translocated ribosomes. Back-translocation proceeds from a post-translocation (POST) complex to a pre-translocation (PRE) complex, thus giving elongation factor G a second chance to translocate the tRNAs correctly. Binds to ribosomes in a GTP-dependent manner. The protein is Elongation factor 4 of Halalkalibacterium halodurans (strain ATCC BAA-125 / DSM 18197 / FERM 7344 / JCM 9153 / C-125) (Bacillus halodurans).